A 362-amino-acid chain; its full sequence is Phosphoserine aminotransferase (362 aa).

Arg-42 is a binding site for L-glutamate. Pyridoxal 5'-phosphate-binding positions include 76-77 (AR), Trp-102, Thr-154, Asp-174, and Gln-197. Lys-198 bears the N6-(pyridoxal phosphate)lysine mark. 239-240 (NT) is a pyridoxal 5'-phosphate binding site.

Belongs to the class-V pyridoxal-phosphate-dependent aminotransferase family. SerC subfamily. In terms of assembly, homodimer. Requires pyridoxal 5'-phosphate as cofactor.

It is found in the cytoplasm. The enzyme catalyses O-phospho-L-serine + 2-oxoglutarate = 3-phosphooxypyruvate + L-glutamate. It catalyses the reaction 4-(phosphooxy)-L-threonine + 2-oxoglutarate = (R)-3-hydroxy-2-oxo-4-phosphooxybutanoate + L-glutamate. It participates in amino-acid biosynthesis; L-serine biosynthesis; L-serine from 3-phospho-D-glycerate: step 2/3. It functions in the pathway cofactor biosynthesis; pyridoxine 5'-phosphate biosynthesis; pyridoxine 5'-phosphate from D-erythrose 4-phosphate: step 3/5. Its function is as follows. Catalyzes the reversible conversion of 3-phosphohydroxypyruvate to phosphoserine and of 3-hydroxy-2-oxo-4-phosphonooxybutanoate to phosphohydroxythreonine. In Buchnera aphidicola subsp. Cinara cedri (strain Cc), this protein is Phosphoserine aminotransferase.